Consider the following 394-residue polypeptide: Methylthioribose kinase (394 aa).

ATP contacts are provided by residues asparagine 44, lysine 61, and 115-117; that span reads EDL. Aspartate 233 serves as a coordination point for substrate. 250–252 contacts ATP; the sequence is DPE. Arginine 337 serves as a coordination point for substrate.

It belongs to the methylthioribose kinase family. As to quaternary structure, homodimer.

It catalyses the reaction 5-(methylsulfanyl)-D-ribose + ATP = 5-(methylsulfanyl)-alpha-D-ribose 1-phosphate + ADP + H(+). It functions in the pathway amino-acid biosynthesis; L-methionine biosynthesis via salvage pathway; S-methyl-5-thio-alpha-D-ribose 1-phosphate from S-methyl-5'-thioadenosine (hydrolase route): step 2/2. Functionally, catalyzes the phosphorylation of methylthioribose into methylthioribose-1-phosphate. The chain is Methylthioribose kinase from Bacillus velezensis (strain DSM 23117 / BGSC 10A6 / LMG 26770 / FZB42) (Bacillus amyloliquefaciens subsp. plantarum).